The chain runs to 63 residues: Large ribosomal subunit protein bL28 (63 aa).

It belongs to the bacterial ribosomal protein bL28 family.

This is Large ribosomal subunit protein bL28 from Petrotoga mobilis (strain DSM 10674 / SJ95).